The primary structure comprises 147 residues: Submaxillary gland androgen-regulated protein 3A (147 aa).

An N-terminal signal peptide occupies residues 1–22 (MKPLNLVLGLCILVGCFLSCEC). Residues 27–128 (RRHDPRGPFP…ISITTPTARD (102 aa)) form a disordered region. Over residues 33-105 (GPFPPPPPPH…PTPSIPPTGP (73 aa)) the composition is skewed to pro residues. 3 tandem repeats follow at residues 43–54 (GPGIGRPHPPPF), 55–66 (GPGIGRPPPPPF), and 67–78 (GPGIGRPPPPPP). The tract at residues 43-78 (GPGIGRPHPPPFGPGIGRPPPPPFGPGIGRPPPPPP) is 3 X 12 AA tandem repeats of G-P-G-I-G-R-P-[HP]-P-P-P-[PF]. Over residues 108 to 127 (TVQATTMPAASISITTPTAR) the composition is skewed to polar residues.

The protein belongs to the PROL1/PROL3 family. Secreted into saliva by submaxillary gland.

The protein resides in the secreted. Functionally, may play a role in protection or detoxification. This Mus musculus (Mouse) protein is Submaxillary gland androgen-regulated protein 3A (Smr3a).